Consider the following 429-residue polypeptide: Enolase 1 (429 aa).

Gln-163 is a binding site for (2R)-2-phosphoglycerate. The active-site Proton donor is Glu-205. Mg(2+) contacts are provided by Asp-242, Glu-287, and Asp-314. (2R)-2-phosphoglycerate is bound by residues Lys-339, Arg-368, Ser-369, and Lys-390. Lys-339 serves as the catalytic Proton acceptor.

It belongs to the enolase family. The cofactor is Mg(2+).

The protein localises to the cytoplasm. It is found in the secreted. The protein resides in the cell surface. It catalyses the reaction (2R)-2-phosphoglycerate = phosphoenolpyruvate + H2O. It functions in the pathway carbohydrate degradation; glycolysis; pyruvate from D-glyceraldehyde 3-phosphate: step 4/5. Functionally, catalyzes the reversible conversion of 2-phosphoglycerate (2-PG) into phosphoenolpyruvate (PEP). It is essential for the degradation of carbohydrates via glycolysis. This is Enolase 1 from Cupriavidus metallidurans (strain ATCC 43123 / DSM 2839 / NBRC 102507 / CH34) (Ralstonia metallidurans).